A 487-amino-acid chain; its full sequence is Citrate/succinate antiporter (487 aa).

Transmembrane regions (helical) follow at residues 11–31 (LLAP…DGMP), 60–80 (FIAV…AKEL), 95–115 (GLAG…IFAL), 138–158 (TLTL…FTPS), 190–210 (IGGY…SMFV), 214–234 (APNV…ISWL), 237–257 (FLCF…LSYV), 288–308 (WTLI…SEVI), 309–329 (NATA…VVPW), 345–365 (LATL…DWFA), 379–399 (ATVI…ASLS), 401–421 (HTAT…GVPM), 424–444 (LCIL…YATG), and 463–483 (LGAI…WPIL).

It belongs to the SLC13A/DASS transporter (TC 2.A.47) family. DIT1 subfamily.

Its subcellular location is the cell inner membrane. In terms of biological role, responsible for the uptake of citrate in exchange to the efflux of succinate. Has a relatively broad specificity for C(4)-dicarboxylates and tricarboxylates. The protein is Citrate/succinate antiporter (citT) of Escherichia coli O157:H7.